The chain runs to 531 residues: Polypyrimidine tract-binding protein 2 (531 aa).

An N-acetylmethionine modification is found at M1. A phosphoserine mark is found at S26 and S27. RRM domains follow at residues 59–133 and 181–257; these read RVLH…YSNH and LRII…FSKL. S308 bears the Phosphoserine mark. 2 consecutive RRM domains span residues 338–412 and 455–529; these read TVLL…LSKH and ATLH…FSKS.

In terms of assembly, monomer. Interacts with NOVA1; the interaction is direct. Identified in a mRNP complex, at least composed of DHX9, DDX3X, ELAVL1, HNRNPU, IGF2BP1, ILF3, PABPC1, PCBP2, PTBP2, STAU1, STAU2, SYNCRIP and YBX1. Part of a ternary complex containing KHSRP and HNRPH1. Interacts with NOVA2; the interaction is direct. In terms of tissue distribution, mainly expressed in brain although also detected in other tissues like heart and skeletal muscle. Isoform 1 and isoform 2 are specifically expressed in neuronal tissues. Isoform 3 and isoform 4 are expressed in non-neuronal tissues. Isoform 5 and isoform 6 are truncated forms expressed in non-neuronal tissues.

It is found in the nucleus. In terms of biological role, RNA-binding protein which binds to intronic polypyrimidine tracts and mediates negative regulation of exons splicing. May antagonize in a tissue-specific manner the ability of NOVA1 to activate exon selection. In addition to its function in pre-mRNA splicing, plays also a role in the regulation of translation. Functionally, reduced affinity for RNA. This is Polypyrimidine tract-binding protein 2 from Homo sapiens (Human).